The following is a 295-amino-acid chain: Small ribosomal subunit protein uS2 (295 aa).

The protein belongs to the universal ribosomal protein uS2 family. Component of the small ribosomal subunit. Mature ribosomes consist of a small (40S) and a large (60S) subunit. The 40S subunit contains about 33 different proteins and 1 molecule of RNA (18S). The 60S subunit contains about 49 different proteins and 3 molecules of RNA (25S, 5.8S and 5S). Interacts with RPS21.

The protein localises to the cytoplasm. Required for the assembly and/or stability of the 40S ribosomal subunit. Required for the processing of the 20S rRNA-precursor to mature 18S rRNA in a late step of the maturation of 40S ribosomal subunits. The chain is Small ribosomal subunit protein uS2 from Paracoccidioides brasiliensis (strain Pb18).